Reading from the N-terminus, the 430-residue chain is Gamma-glutamyl phosphate reductase (430 aa).

The protein belongs to the gamma-glutamyl phosphate reductase family.

The protein localises to the cytoplasm. The enzyme catalyses L-glutamate 5-semialdehyde + phosphate + NADP(+) = L-glutamyl 5-phosphate + NADPH + H(+). Its pathway is amino-acid biosynthesis; L-proline biosynthesis; L-glutamate 5-semialdehyde from L-glutamate: step 2/2. Its function is as follows. Catalyzes the NADPH-dependent reduction of L-glutamate 5-phosphate into L-glutamate 5-semialdehyde and phosphate. The product spontaneously undergoes cyclization to form 1-pyrroline-5-carboxylate. In Corynebacterium diphtheriae (strain ATCC 700971 / NCTC 13129 / Biotype gravis), this protein is Gamma-glutamyl phosphate reductase.